The following is a 158-amino-acid chain: MNVVQGNIESKNAKVAIVVSRFNSFVVESLLEGAVDTLKRFGQVADDNITVVRVPGAVELPLAARRVAASGKFDGIIALGAVIRGGTPHFDFVAGECNKGLAQIALEFDLPVSFGVLTTDTIEQAIERSGTKAGNKGGEAALGLLEMVNVLQELEQQL.

5-amino-6-(D-ribitylamino)uracil contacts are provided by residues Phe22, 57–59 (AVE), and 81–83 (AVI). 86–87 (GT) is a binding site for (2S)-2-hydroxy-3-oxobutyl phosphate. His89 functions as the Proton donor in the catalytic mechanism. Residue Phe114 coordinates 5-amino-6-(D-ribitylamino)uracil. Arg128 is a (2S)-2-hydroxy-3-oxobutyl phosphate binding site.

Belongs to the DMRL synthase family. Forms an icosahedral capsid composed of 60 subunits, arranged as a dodecamer of pentamers.

It catalyses the reaction (2S)-2-hydroxy-3-oxobutyl phosphate + 5-amino-6-(D-ribitylamino)uracil = 6,7-dimethyl-8-(1-D-ribityl)lumazine + phosphate + 2 H2O + H(+). It participates in cofactor biosynthesis; riboflavin biosynthesis; riboflavin from 2-hydroxy-3-oxobutyl phosphate and 5-amino-6-(D-ribitylamino)uracil: step 1/2. Its function is as follows. Catalyzes the formation of 6,7-dimethyl-8-ribityllumazine by condensation of 5-amino-6-(D-ribitylamino)uracil with 3,4-dihydroxy-2-butanone 4-phosphate. This is the penultimate step in the biosynthesis of riboflavin. The protein is 6,7-dimethyl-8-ribityllumazine synthase of Shewanella loihica (strain ATCC BAA-1088 / PV-4).